Here is a 308-residue protein sequence, read N- to C-terminus: Glycine--tRNA ligase alpha subunit (308 aa).

Belongs to the class-II aminoacyl-tRNA synthetase family. As to quaternary structure, tetramer of two alpha and two beta subunits.

The protein resides in the cytoplasm. It catalyses the reaction tRNA(Gly) + glycine + ATP = glycyl-tRNA(Gly) + AMP + diphosphate. This is Glycine--tRNA ligase alpha subunit from Polaromonas naphthalenivorans (strain CJ2).